The primary structure comprises 1040 residues: Multidrug resistance protein MdtB (1040 aa).

12 consecutive transmembrane segments (helical) span residues 25–45, 347–367, 369–389, 396–416, 440–460, 472–492, 537–557, 863–883, 888–908, 910–930, 968–988, and 998–1018; these read LLMA…PVAA, LMLA…NIPA, IIPG…MVFL, LTLM…IVVI, IGFT…PLLF, FAVT…TLTP, WLTL…WIVI, LGST…VLGV, FIHP…ALLA, IIAG…LIGI, ILMT…STGV, and IAMV…TPVI.

Belongs to the resistance-nodulation-cell division (RND) (TC 2.A.6) family. MdtB subfamily. As to quaternary structure, part of a tripartite efflux system composed of MdtA, MdtB and MdtC. MdtB forms a heteromultimer with MdtC.

The protein resides in the cell inner membrane. In Salmonella agona (strain SL483), this protein is Multidrug resistance protein MdtB.